We begin with the raw amino-acid sequence, 434 residues long: Eukaryotic translation initiation factor 3 subunit E (434 aa).

The PCI domain maps to 219–392 (FFNHPKGRDL…GHVVMGTQPL (174 aa)).

The protein belongs to the eIF-3 subunit E family. In terms of assembly, component of the eukaryotic translation initiation factor 3 (eIF-3) complex. The eIF-3 complex interacts with pix. Interacts with mxt.

The protein localises to the cytoplasm. Functionally, component of the eukaryotic translation initiation factor 3 (eIF-3) complex, which is involved in protein synthesis of a specialized repertoire of mRNAs and, together with other initiation factors, stimulates binding of mRNA and methionyl-tRNAi to the 40S ribosome. The eIF-3 complex specifically targets and initiates translation of a subset of mRNAs involved in cell proliferation. The protein is Eukaryotic translation initiation factor 3 subunit E (eIF3-S6) of Drosophila pseudoobscura pseudoobscura (Fruit fly).